Here is a 490-residue protein sequence, read N- to C-terminus: Gallate decarboxylase (490 aa).

D165 serves as a coordination point for Mn(2+). Prenylated FMN is bound by residues 168–170 and G187; that span reads IHR. E233 serves as a coordination point for Mn(2+). E289 (proton acceptor) is an active-site residue.

It belongs to the UbiD family. It depends on prenylated FMN as a cofactor. Mn(2+) serves as cofactor.

It catalyses the reaction 3,4,5-trihydroxybenzoate + H(+) = 1,2,3-trihydroxybenzene + CO2. The enzyme catalyses 3,4-dihydroxybenzoate + H(+) = catechol + CO2. Functionally, involved in tannin degradation. Catalyzes the decarboxylation of gallic acid and protocatechuic acid to pyrogallol and catechol, respectively. The sequence is that of Gallate decarboxylase from Lactiplantibacillus plantarum (strain ATCC BAA-793 / NCIMB 8826 / WCFS1) (Lactobacillus plantarum).